The sequence spans 208 residues: 2-dehydro-3-deoxy-phosphogluconate aldolase (208 aa).

Glutamate 41 acts as the Proton acceptor in catalysis. Pyruvate-binding residues include arginine 45, threonine 68, and lysine 128. Lysine 128 acts as the Schiff-base intermediate with substrate in catalysis.

Belongs to the KHG/KDPG aldolase family. In terms of assembly, homotrimer.

The protein resides in the cytoplasm. The catalysed reaction is 2-dehydro-3-deoxy-6-phospho-D-gluconate = D-glyceraldehyde 3-phosphate + pyruvate. The protein operates within carbohydrate acid metabolism; 2-dehydro-3-deoxy-D-gluconate degradation; D-glyceraldehyde 3-phosphate and pyruvate from 2-dehydro-3-deoxy-D-gluconate: step 2/2. In terms of biological role, involved in the degradation of glucose via the Entner-Doudoroff pathway. Catalyzes the reversible, stereospecific retro-aldol cleavage of 2-keto-3-deoxy-6-phosphogluconate (KDPG) to pyruvate and D-glyceraldehyde-3-phosphate. In Zymomonas mobilis subsp. mobilis (strain ATCC 31821 / ZM4 / CP4), this protein is 2-dehydro-3-deoxy-phosphogluconate aldolase.